A 395-amino-acid polypeptide reads, in one-letter code: 1-deoxy-D-xylulose 5-phosphate reductoisomerase (395 aa).

Positions 10, 11, 12, 13, 38, and 122 each coordinate NADPH. Residue Lys-123 participates in 1-deoxy-D-xylulose 5-phosphate binding. Glu-124 contacts NADPH. Asp-148 lines the Mn(2+) pocket. Residues Ser-149, Glu-150, Ser-178, and His-200 each coordinate 1-deoxy-D-xylulose 5-phosphate. Glu-150 is a Mn(2+) binding site. Gly-206 lines the NADPH pocket. 1-deoxy-D-xylulose 5-phosphate is bound by residues Ser-213, Asn-218, Lys-219, and Glu-222. Glu-222 serves as a coordination point for Mn(2+).

The protein belongs to the DXR family. It depends on Mg(2+) as a cofactor. Mn(2+) serves as cofactor.

It catalyses the reaction 2-C-methyl-D-erythritol 4-phosphate + NADP(+) = 1-deoxy-D-xylulose 5-phosphate + NADPH + H(+). The protein operates within isoprenoid biosynthesis; isopentenyl diphosphate biosynthesis via DXP pathway; isopentenyl diphosphate from 1-deoxy-D-xylulose 5-phosphate: step 1/6. Functionally, catalyzes the NADPH-dependent rearrangement and reduction of 1-deoxy-D-xylulose-5-phosphate (DXP) to 2-C-methyl-D-erythritol 4-phosphate (MEP). The polypeptide is 1-deoxy-D-xylulose 5-phosphate reductoisomerase (Elusimicrobium minutum (strain Pei191)).